The sequence spans 422 residues: Histidine--tRNA ligase (422 aa).

The protein belongs to the class-II aminoacyl-tRNA synthetase family. Homodimer.

It is found in the cytoplasm. The catalysed reaction is tRNA(His) + L-histidine + ATP = L-histidyl-tRNA(His) + AMP + diphosphate + H(+). The polypeptide is Histidine--tRNA ligase (Lysinibacillus sphaericus (strain C3-41)).